The primary structure comprises 768 residues: Post-transcriptional regulator MKT1 (768 aa).

This sequence belongs to the XPG/RAD2 endonuclease family. As to quaternary structure, interacts with PBP1.

It is found in the cytoplasm. The protein resides in the cytosol. Its function is as follows. Involved in 3'-UTR mediated RNA regulation. Complexes with PBP1 to promote mRNA interactions with poly(A)-binding protein. In Cryptococcus neoformans var. grubii serotype A (strain H99 / ATCC 208821 / CBS 10515 / FGSC 9487) (Filobasidiella neoformans var. grubii), this protein is Post-transcriptional regulator MKT1.